The following is a 158-amino-acid chain: SsrA-binding protein (158 aa).

The disordered stretch occupies residues 131 to 158; it reads GKKTHDKRETEKKRDWNREKARLLRDRG. The span at 136 to 158 shows a compositional bias: basic and acidic residues; it reads DKRETEKKRDWNREKARLLRDRG.

The protein belongs to the SmpB family.

It is found in the cytoplasm. In terms of biological role, required for rescue of stalled ribosomes mediated by trans-translation. Binds to transfer-messenger RNA (tmRNA), required for stable association of tmRNA with ribosomes. tmRNA and SmpB together mimic tRNA shape, replacing the anticodon stem-loop with SmpB. tmRNA is encoded by the ssrA gene; the 2 termini fold to resemble tRNA(Ala) and it encodes a 'tag peptide', a short internal open reading frame. During trans-translation Ala-aminoacylated tmRNA acts like a tRNA, entering the A-site of stalled ribosomes, displacing the stalled mRNA. The ribosome then switches to translate the ORF on the tmRNA; the nascent peptide is terminated with the 'tag peptide' encoded by the tmRNA and targeted for degradation. The ribosome is freed to recommence translation, which seems to be the essential function of trans-translation. This chain is SsrA-binding protein, found in Brucella ovis (strain ATCC 25840 / 63/290 / NCTC 10512).